The chain runs to 652 residues: DNA ligase (652 aa).

NAD(+) is bound by residues 29-33 (DSQYD), 78-79 (SL), and Glu-107. Lys-109 serves as the catalytic N6-AMP-lysine intermediate. Residues Arg-130, Glu-164, Lys-278, and Lys-302 each contribute to the NAD(+) site. Cys-395, Cys-398, Cys-413, and Cys-418 together coordinate Zn(2+). The BRCT domain occupies 577 to 652 (STDAQLSGLT…IQDEDWLLNL (76 aa)).

The protein belongs to the NAD-dependent DNA ligase family. LigA subfamily. Mg(2+) is required as a cofactor. It depends on Mn(2+) as a cofactor.

It catalyses the reaction NAD(+) + (deoxyribonucleotide)n-3'-hydroxyl + 5'-phospho-(deoxyribonucleotide)m = (deoxyribonucleotide)n+m + AMP + beta-nicotinamide D-nucleotide.. DNA ligase that catalyzes the formation of phosphodiester linkages between 5'-phosphoryl and 3'-hydroxyl groups in double-stranded DNA using NAD as a coenzyme and as the energy source for the reaction. It is essential for DNA replication and repair of damaged DNA. In Streptococcus agalactiae serotype III (strain NEM316), this protein is DNA ligase.